The chain runs to 85 residues: Alpha-conotoxin Lt28.1 (85 aa).

An N-terminal signal peptide occupies residues 1 to 21 (MPKLEMMLLVLLILPLCYIDA). A propeptide spanning residues 22–40 (VGPPPPWNMEDEIIEHWQK) is cleaved from the precursor. Disulfide bonds link cysteine 61/cysteine 74, cysteine 66/cysteine 84, cysteine 67/cysteine 79, and cysteine 72/cysteine 81.

It belongs to the conotoxin D superfamily. As to expression, expressed by the venom duct.

The protein localises to the secreted. Its function is as follows. Alpha-conotoxins act on postsynaptic membranes, they bind to the nicotinic acetylcholine receptors (nAChR) and thus inhibit them. This toxin weakly inhibits alpha-9-alpha-10/CHRNA9-CHRNA10 nAChRs (IC(50)=3 uM). This chain is Alpha-conotoxin Lt28.1, found in Conus litteratus (Lettered cone).